The following is a 599-amino-acid chain: Aspartate--tRNA(Asp/Asn) ligase (599 aa).

Position 174 (Glu174) interacts with L-aspartate. Residues Gln198 to Lys201 are aspartate. Position 220 (Arg220) interacts with L-aspartate. Residues Arg220 to Glu222 and Gln229 contribute to the ATP site. His457 provides a ligand contact to L-aspartate. Glu491 contributes to the ATP binding site. Arg498 is an L-aspartate binding site. Gly543–Arg546 lines the ATP pocket.

The protein belongs to the class-II aminoacyl-tRNA synthetase family. Type 1 subfamily. As to quaternary structure, homodimer.

The protein resides in the cytoplasm. It catalyses the reaction tRNA(Asx) + L-aspartate + ATP = L-aspartyl-tRNA(Asx) + AMP + diphosphate. In terms of biological role, aspartyl-tRNA synthetase with relaxed tRNA specificity since it is able to aspartylate not only its cognate tRNA(Asp) but also tRNA(Asn). Reaction proceeds in two steps: L-aspartate is first activated by ATP to form Asp-AMP and then transferred to the acceptor end of tRNA(Asp/Asn). This is Aspartate--tRNA(Asp/Asn) ligase from Paraburkholderia xenovorans (strain LB400).